Here is a 269-residue protein sequence, read N- to C-terminus: Energy-coupling factor transporter ATP-binding protein EcfA1 (269 aa).

Positions 8-242 (IVFKNVSFQY…AEELTTIGLD (235 aa)) constitute an ABC transporter domain. 42-49 (GHNGSGKS) lines the ATP pocket.

Belongs to the ABC transporter superfamily. Energy-coupling factor EcfA family. In terms of assembly, forms a stable energy-coupling factor (ECF) transporter complex composed of 2 membrane-embedded substrate-binding proteins (S component), 2 ATP-binding proteins (A component) and 2 transmembrane proteins (T component).

Its subcellular location is the cell membrane. In terms of biological role, ATP-binding (A) component of a common energy-coupling factor (ECF) ABC-transporter complex. Unlike classic ABC transporters this ECF transporter provides the energy necessary to transport a number of different substrates. This Staphylococcus aureus (strain MSSA476) protein is Energy-coupling factor transporter ATP-binding protein EcfA1.